The following is a 246-amino-acid chain: 14-3-3 protein eta (246 aa).

Gly2 is subject to N-acetylglycine. A phosphoserine mark is found at Ser25 and Ser59.

Belongs to the 14-3-3 family. Homodimer. Interacts with many nuclear hormone receptors and cofactors including AR, ESR1, ESR2, MC2R, NR3C1, NRIP1, PPARBP and THRA. Interacts with ABL1 (phosphorylated form); the interaction retains it in the cytoplasm. Interacts with ARHGEF28 and CDK16. Weakly interacts with CDKN1B. Interacts with GAB2. Interacts with KCNK18 in a phosphorylation-dependent manner. Interacts with SAMSN1. Interacts with the 'Ser-241' phosphorylated form of PDPK1. Interacts with the 'Thr-369' phosphorylated form of DAPK2. Interacts with PI4KB, TBC1D22A and TBC1D22B. Interacts with SLITRK1. Interacts with MEFV. Post-translationally, phosphorylated on Ser-59 by protein kinase C delta type catalytic subunit in a sphingosine-dependent fashion. As to expression, expressed mainly in the brain and present in other tissues albeit at lower levels.

Adapter protein implicated in the regulation of a large spectrum of both general and specialized signaling pathways. Binds to a large number of partners, usually by recognition of a phosphoserine or phosphothreonine motif. Binding generally results in the modulation of the activity of the binding partner. Negatively regulates the kinase activity of PDPK1. The sequence is that of 14-3-3 protein eta (YWHAH) from Homo sapiens (Human).